The sequence spans 179 residues: Large ribosomal subunit protein uL6 (179 aa).

This sequence belongs to the universal ribosomal protein uL6 family. As to quaternary structure, part of the 50S ribosomal subunit.

In terms of biological role, this protein binds to the 23S rRNA, and is important in its secondary structure. It is located near the subunit interface in the base of the L7/L12 stalk, and near the tRNA binding site of the peptidyltransferase center. This is Large ribosomal subunit protein uL6 from Pelobacter propionicus (strain DSM 2379 / NBRC 103807 / OttBd1).